The sequence spans 301 residues: Dimethylsulfoniopropionate lyase (301 aa).

Catalysis depends on proton donor/acceptor residues Cys-111 and Cys-230.

It belongs to the aspartate/glutamate racemases family. ALMA1 subfamily. In terms of assembly, homotetramer.

It carries out the reaction S,S-dimethyl-beta-propiothetin = acrylate + dimethyl sulfide + H(+). In terms of biological role, mediates cleavage of dimethylsulfoniopropionate (DMSP) into dimethyl sulfide (DMS) and acrylate. DMS is the principal form by which sulfur is transported from oceans to the atmosphere and is a key component of the ocean sulfur cycle. The chain is Dimethylsulfoniopropionate lyase from Durusdinium sp. clade D (Symbiodinium sp. clade D).